Reading from the N-terminus, the 232-residue chain is Purine nucleoside phosphorylase DeoD-type (232 aa).

H4 provides a ligand contact to a purine D-ribonucleoside. Residues G20, R24, R43, and 87-90 contribute to the phosphate site; that span reads RVGS. A purine D-ribonucleoside-binding positions include E162, 178–180, and 202–203; these read EME and SD. D203 functions as the Proton donor in the catalytic mechanism.

It belongs to the PNP/UDP phosphorylase family. As to quaternary structure, homohexamer; trimer of homodimers.

It carries out the reaction a purine D-ribonucleoside + phosphate = a purine nucleobase + alpha-D-ribose 1-phosphate. It catalyses the reaction a purine 2'-deoxy-D-ribonucleoside + phosphate = a purine nucleobase + 2-deoxy-alpha-D-ribose 1-phosphate. Its function is as follows. Catalyzes the reversible phosphorolytic breakdown of the N-glycosidic bond in the beta-(deoxy)ribonucleoside molecules, with the formation of the corresponding free purine bases and pentose-1-phosphate. This is Purine nucleoside phosphorylase DeoD-type from Bacillus velezensis (strain DSM 23117 / BGSC 10A6 / LMG 26770 / FZB42) (Bacillus amyloliquefaciens subsp. plantarum).